We begin with the raw amino-acid sequence, 180 residues long: Methionine-R-sulfoxide reductase B2, mitochondrial (180 aa).

A mitochondrion-targeting transit peptide spans 1–41 (MSRFLVRLSTVVSKGATGKSVLPQKRIFAGIRLISSSTGLQ). Residues 49–178 (STDWQRKLSP…NSVALNFKPR (130 aa)) enclose the MsrB domain. 4 residues coordinate Zn(2+): Cys88, Cys91, Cys144, and Cys147. Residue Cys167 is the Nucleophile of the active site.

Belongs to the MsrB Met sulfoxide reductase family. Requires Zn(2+) as cofactor.

It is found in the mitochondrion. The catalysed reaction is L-methionyl-[protein] + [thioredoxin]-disulfide + H2O = L-methionyl-(R)-S-oxide-[protein] + [thioredoxin]-dithiol. It carries out the reaction [thioredoxin]-disulfide + L-methionine + H2O = L-methionine (R)-S-oxide + [thioredoxin]-dithiol. Functionally, methionine-sulfoxide reductase that specifically reduces methionine (R)-sulfoxide back to methionine. While in many cases, methionine oxidation is the result of random oxidation following oxidative stress, methionine oxidation is also a post-translational modification that takes place on specific residue. Upon oxidative stress, may play a role in the preservation of mitochondrial integrity by decreasing the intracellular reactive oxygen species build-up through its scavenging role, hence contributing to cell survival and protein maintenance. This Danio rerio (Zebrafish) protein is Methionine-R-sulfoxide reductase B2, mitochondrial (msrb2).